The primary structure comprises 355 residues: Beta-porphyranase C (355 aa).

Positions 1-18 (MIKTLKRIPLVFLIAIMA) are cleaved as a signal peptide. Cysteine 19 carries N-palmitoyl cysteine lipidation. Cysteine 19 is lipidated: S-diacylglycerol cysteine. Positions 22–72 (SGDNGKDKVEEQEQAQEQGEKKGQGEERDKEDGIDGLQPTFLADQDPKPDD) are disordered. The span at 39–54 (QGEKKGQGEERDKEDG) shows a compositional bias: basic and acidic residues. The GH16 domain maps to 71–355 (DDKKWIKVEG…WVRVWQLEDL (285 aa)). Residues tryptophan 110, glutamate 208, and glutamate 213 each contribute to the substrate site. The Nucleophile role is filled by glutamate 208. Glutamate 213 acts as the Proton donor in catalysis.

The protein belongs to the glycosyl hydrolase 16 family.

Its subcellular location is the cell outer membrane. The catalysed reaction is Hydrolysis of beta-D-galactopyranose-(1-&gt;4)-alpha-L-galactopyranose-6-sulfate linkages in porphyran.. Cleaves the sulfated polysaccharide porphyran at the (1-&gt;4) linkages between beta-D-galactopyranose and alpha-L-galactopyranose-6-sulfate, forming mostly the disaccharide alpha-L-galactopyranose-6-sulfate-(1-&gt;3)-beta-D-galactose. In Zobellia galactanivorans (strain DSM 12802 / CCUG 47099 / CIP 106680 / NCIMB 13871 / Dsij), this protein is Beta-porphyranase C (porC).